We begin with the raw amino-acid sequence, 141 residues long: Hemoglobin subunit alpha (141 aa).

In terms of domain architecture, Globin spans 1 to 141 (VLSSADKANI…VSTVLTSKYR (141 aa)). The residue at position 3 (serine 3) is a Phosphoserine. N6-succinyllysine occurs at positions 7 and 11. Lysine 16 carries the N6-acetyllysine; alternate modification. Lysine 16 is modified (N6-succinyllysine; alternate). Residue tyrosine 24 is modified to Phosphotyrosine. Lysine 40 bears the N6-succinyllysine mark. Serine 49 is modified (phosphoserine). Residue histidine 58 coordinates O2. Histidine 87 contributes to the heme b binding site. Phosphoserine is present on serine 102. At threonine 108 the chain carries Phosphothreonine. Serine 124 and serine 131 each carry phosphoserine. Phosphothreonine occurs at positions 134 and 137. Position 138 is a phosphoserine (serine 138).

It belongs to the globin family. As to quaternary structure, heterotetramer of two alpha chains and two beta chains. In terms of tissue distribution, red blood cells.

Involved in oxygen transport from the lung to the various peripheral tissues. Functionally, hemopressin acts as an antagonist peptide of the cannabinoid receptor CNR1. Hemopressin-binding efficiently blocks cannabinoid receptor CNR1 and subsequent signaling. This is Hemoglobin subunit alpha (HBA) from Proteles cristata (Aardwolf).